A 167-amino-acid chain; its full sequence is Ureidoglycolate lyase (167 aa).

Belongs to the ureidoglycolate lyase family. As to quaternary structure, homodimer. The cofactor is Ni(2+).

It catalyses the reaction (S)-ureidoglycolate = urea + glyoxylate. It functions in the pathway nitrogen metabolism; (S)-allantoin degradation. Functionally, catalyzes the catabolism of the allantoin degradation intermediate (S)-ureidoglycolate, generating urea and glyoxylate. Involved in the utilization of allantoin as nitrogen source. The protein is Ureidoglycolate lyase of Pseudomonas putida (strain ATCC 700007 / DSM 6899 / JCM 31910 / BCRC 17059 / LMG 24140 / F1).